The primary structure comprises 475 residues: Pregnancy-specific glycoprotein 22 (475 aa).

A signal peptide spans 1-35; it reads MEVSSELLSNGWTSWQRVLLTASLLTCWLLPITAG. Ig-like V-type domains lie at 44–140, 162–260, and 280–380; these read KLVE…FLQV, PASV…YLQV, and PVPP…QVNV. N-linked (GlcNAc...) asparagine glycosylation is found at Asn-103, Asn-110, and Asn-231. Positions 387–471 constitute an Ig-like C2-type domain; it reads PVMRVTDSTV…SKTSLPVRLT (85 aa). Cys-406 and Cys-454 are oxidised to a cystine.

The protein belongs to the immunoglobulin superfamily. CEA family.

Its subcellular location is the secreted. Its function is as follows. May have an angiogenic function during early placental development. Binds to cell-surface heparan sulfate proteoglycans (HSPGs), and stimulates secretion of the proangiogenic factors VEGFA and TGFB from uterine dendritic cells and natural killer cells. Also induces endothelial tube formation in vitro. The protein is Pregnancy-specific glycoprotein 22 of Mus musculus (Mouse).